The sequence spans 113 residues: uncharacterized protein (113 aa).

The signal sequence occupies residues 1 to 29 (MLVVYMCIWVLYLLLFLFLFLFIASPASL). A run of 2 helical transmembrane segments spans residues 34 to 54 (THIL…CAFF) and 56 to 76 (QVLC…FYFF).

The protein resides in the membrane. This is an uncharacterized protein from Saccharomyces cerevisiae (strain ATCC 204508 / S288c) (Baker's yeast).